The following is a 505-amino-acid chain: ATP synthase subunit alpha (505 aa).

Residue 169-176 (GDRQIGKT) coordinates ATP.

It belongs to the ATPase alpha/beta chains family. In terms of assembly, F-type ATPases have 2 components, CF(1) - the catalytic core - and CF(0) - the membrane proton channel. CF(1) has five subunits: alpha(3), beta(3), gamma(1), delta(1), epsilon(1). CF(0) has three main subunits: a(1), b(2) and c(9-12). The alpha and beta chains form an alternating ring which encloses part of the gamma chain. CF(1) is attached to CF(0) by a central stalk formed by the gamma and epsilon chains, while a peripheral stalk is formed by the delta and b chains.

The protein resides in the cell inner membrane. It catalyses the reaction ATP + H2O + 4 H(+)(in) = ADP + phosphate + 5 H(+)(out). Functionally, produces ATP from ADP in the presence of a proton gradient across the membrane. The alpha chain is a regulatory subunit. In Desulfatibacillum aliphaticivorans, this protein is ATP synthase subunit alpha.